A 478-amino-acid polypeptide reads, in one-letter code: Lysosome membrane protein 2 (478 aa).

The Cytoplasmic portion of the chain corresponds to 2–4 (ARC). A helical membrane pass occupies residues 5–27 (CFYTAGTLSLLLLVTSVTLLVAR). The Lumenal segment spans residues 28 to 433 (VFQKAVDQTI…QLKSVINTTL (406 aa)). N-linked (GlcNAc...) asparagine glycans are attached at residues Asn45, Asn68, Asn105, and Asn122. Residues 155-191 (IIEAMLKAYQQTLFVTHTVHELLWGYKDEVLSLVHIF) form an important for interaction with GBA1 region. 4 N-linked (GlcNAc...) asparagine glycosylation sites follow: Asn206, Asn224, Asn249, and Asn304. Intrachain disulfides connect Cys274–Cys329 and Cys312–Cys318. N-linked (GlcNAc...) asparagine glycosylation is found at Asn325, Asn412, and Asn430. Residues 434–459 (IVTNIPYIIMALGVFFGLIFTWLACR) form a helical membrane-spanning segment. Over 460–478 (GQGSTDEGTADERAPLIRT) the chain is Cytoplasmic.

The protein belongs to the CD36 family. In terms of assembly, interacts with GBA1. Acylated by palmitic acid group(s).

Its subcellular location is the lysosome membrane. Acts as a lysosomal receptor for glucosylceramidase (GBA1) targeting. This chain is Lysosome membrane protein 2 (Scarb2), found in Rattus norvegicus (Rat).